A 430-amino-acid polypeptide reads, in one-letter code: Functional amyloid transporter FapF (430 aa).

Positions 1 to 24 (MHRSLSLRAVVCLSTLLPASLLYA) are cleaved as a signal peptide. Residues 25–131 (APDVDIETLK…EASGFFGNGK (107 aa)) lie on the Periplasmic side of the membrane. Residues 29–64 (DIETLKQELLELKQRYEAQQKALAVLEQRVRQVEDQ) adopt a coiled-coil conformation. Residues 62-114 (EDQPATPAPKRLAKSPADFKQSGSTVAASSGTGGATGGSSYGQSLKDDSEPAQ) form a disordered region. Residues 92–101 (GTGGATGGSS) show a composition bias toward gly residues. Residues 113 to 125 (AQSVSNLYNEASG) form an alpha helical plug region. Residues 132–142 (FSFETGITYAR) traverse the membrane as a beta stranded segment. Residues 143–172 (YDARQLTLNGFLALDSIFLGNINLDRIKAD) are Extracellular-facing. A beta stranded membrane pass occupies residues 173–183 (NWTLDLTGRYN). Residues 184–189 (LDNRWQ) are Periplasmic-facing. Residues 190–198 (FDVNVPVVY) form a beta stranded membrane-spanning segment. Residues 199 to 224 (RESTYQSGGASGGDPQATSEESVSRD) are Extracellular-facing. Residues 203–223 (YQSGGASGGDPQATSEESVSR) are disordered. Residues 225–238 (PTIGDVNFGIAYKF) traverse the membrane as a beta stranded segment. Topologically, residues 239–246 (LDESATMP) are periplasmic. Residues 247 to 256 (DAVVSVRVKA) form a beta stranded membrane-spanning segment. The Extracellular segment spans residues 257 to 288 (PTGKEPFGIKLVRSTANDNLYVPESLPTGNGV). Residues 289-298 (WSITPGLSLV) form a beta stranded membrane-spanning segment. Residues 299–304 (KTFDPA) lie on the Periplasmic side of the membrane. The beta stranded transmembrane segment at 305-314 (VLFGSVSYTH) threads the bilayer. Residues 315–339 (NLEDSFDDISSDVNQKVGGKVRLGD) are Extracellular-facing. Residues 340 to 348 (SFQFGVGVA) traverse the membrane as a beta stranded segment. At 349–356 (FALNERMS) the chain is on the periplasmic side. Residues 357–365 (MSFSVSDLI) form a beta stranded membrane-spanning segment. The Extracellular portion of the chain corresponds to 366 to 386 (QRKSKLKPDGGGWQSIVSSDA). The chain crosses the membrane as a beta stranded span at residues 387–397 (NAGYFNVGMTI). Topologically, residues 398 to 404 (AASENLT) are periplasmic. A beta stranded transmembrane segment spans residues 405 to 412 (IVPNLAIG). Residues 413 to 419 (MTDDAPD) are Extracellular-facing. A beta stranded membrane pass occupies residues 420 to 428 (FTFSLKFPY). Topologically, residues 429–430 (YF) are periplasmic.

This sequence belongs to the amyloid transporter (TC 9.B.153) family. Homotrimer.

The protein localises to the cell outer membrane. Its function is as follows. Transports fibril components across the outer membrane. Upon overexpression of the endogenous six-gene locus (fapA-fapF) in situ cells form large clumps during liquid growth, make large amounts of biofilm and produce amyloid fibrils. Expression of the 6 gene operon in E.coli strain BL21(DE3) induces flocculation and biofilm formation with copious extracellular fibrils. This is Functional amyloid transporter FapF from Pseudomonas fluorescens.